The primary structure comprises 84 residues: MAHKKSGGASRNGRDSNPKYLGVKRFEGQIVDAGNILVRQRGTKIYPGINVGLGRDFTLYALKPGIVKFSIKHGKKYVNVLPIQ.

Positions Met1–Tyr20 are disordered.

This sequence belongs to the bacterial ribosomal protein bL27 family.

The sequence is that of Large ribosomal subunit protein bL27 from Dictyoglomus thermophilum (strain ATCC 35947 / DSM 3960 / H-6-12).